A 356-amino-acid polypeptide reads, in one-letter code: Protein RecA (356 aa).

Residue 67–74 (GPESSGKT) coordinates ATP.

This sequence belongs to the RecA family.

It is found in the cytoplasm. Can catalyze the hydrolysis of ATP in the presence of single-stranded DNA, the ATP-dependent uptake of single-stranded DNA by duplex DNA, and the ATP-dependent hybridization of homologous single-stranded DNAs. It interacts with LexA causing its activation and leading to its autocatalytic cleavage. This Yersinia pestis bv. Antiqua (strain Angola) protein is Protein RecA.